Reading from the N-terminus, the 176-residue chain is DNA repair RAD52-like protein 1, mitochondrial (176 aa).

The transit peptide at 1–37 directs the protein to the mitochondrion; that stretch reads MAGLGLRLKAAKWTLRSGSGAVSREWSSEMGKGVRRF.

The protein belongs to the RAD52 family. Interacts with WHY2. In terms of tissue distribution, expressed in root vascular tissue, tips of primary and secondary roots, young leaves, hydathodes, stomatal guard cells, cauline leaves, flower buds, stipules, carpels, pistils and anther filaments.

Its subcellular location is the mitochondrion. It localises to the nucleus. Its function is as follows. Plant-specific single-stranded DNA-binding protein required for efficient heterologous recombination-dependent DNA repair in nuclear and mitochondrial compartments. Forms large nucleo-protein complexes with WHY2 in mitochondria. Binds ssDNA with high affinity, but with little sequence specificity. Involved in double-stranded DNA break repair. Involved in the hydrolytic splicing pathway in mitochondrion. Facilitates the excision of two cis-spliced group II introns, NAD1 intron 2 and NAD2 intron 1. The polypeptide is DNA repair RAD52-like protein 1, mitochondrial (Arabidopsis thaliana (Mouse-ear cress)).